The sequence spans 185 residues: ATP synthase subunit b, cyanelle (185 aa).

The chain crosses the membrane as a helical span at residues 36 to 58 (LINLLVIFFLLIYQGRPFFTALL).

It belongs to the ATPase B chain family. In terms of assembly, F-type ATPases have 2 components, F(1) - the catalytic core - and F(0) - the membrane proton channel. F(1) has five subunits: alpha(3), beta(3), gamma(1), delta(1), epsilon(1). F(0) has four main subunits: a(1), b(1), b'(1) and c(10-14). The alpha and beta chains form an alternating ring which encloses part of the gamma chain. F(1) is attached to F(0) by a central stalk formed by the gamma and epsilon chains, while a peripheral stalk is formed by the delta, b and b' chains.

It localises to the plastid. It is found in the cyanelle thylakoid membrane. Its function is as follows. F(1)F(0) ATP synthase produces ATP from ADP in the presence of a proton or sodium gradient. F-type ATPases consist of two structural domains, F(1) containing the extramembraneous catalytic core and F(0) containing the membrane proton channel, linked together by a central stalk and a peripheral stalk. During catalysis, ATP synthesis in the catalytic domain of F(1) is coupled via a rotary mechanism of the central stalk subunits to proton translocation. Functionally, component of the F(0) channel, it forms part of the peripheral stalk, linking F(1) to F(0). The polypeptide is ATP synthase subunit b, cyanelle (Cyanophora paradoxa).